The primary structure comprises 253 residues: Large ribosomal subunit protein uL4 (253 aa).

The interval 62 to 107 is disordered; the sequence is WGSGRGVSHVPRLKNSSRAARVPHAKGGRRAHPPKPEADRSEKVNT. Residues 82 to 94 are compositionally biased toward basic residues; it reads RVPHAKGGRRAHP. The span at 95–107 shows a compositional bias: basic and acidic residues; sequence PKPEADRSEKVNT.

The protein belongs to the universal ribosomal protein uL4 family. As to quaternary structure, part of the 50S ribosomal subunit.

In terms of biological role, one of the primary rRNA binding proteins, this protein initially binds near the 5'-end of the 23S rRNA. It is important during the early stages of 50S assembly. It makes multiple contacts with different domains of the 23S rRNA in the assembled 50S subunit and ribosome. Forms part of the polypeptide exit tunnel. In Methanosarcina mazei (strain ATCC BAA-159 / DSM 3647 / Goe1 / Go1 / JCM 11833 / OCM 88) (Methanosarcina frisia), this protein is Large ribosomal subunit protein uL4.